The chain runs to 433 residues: Pyrimidine-nucleoside phosphorylase (433 aa).

81–83 (KHS) is a phosphate binding site. K(+)-binding residues include Gly-88 and Thr-90. Residues Thr-92, 108–110 (KMS), and Thr-120 contribute to the phosphate site. Residues Arg-168 and Lys-187 each coordinate substrate. K(+) contacts are provided by Leu-243, Ala-246, and Glu-255.

This sequence belongs to the thymidine/pyrimidine-nucleoside phosphorylase family. In terms of assembly, homodimer. Requires K(+) as cofactor.

It carries out the reaction uridine + phosphate = alpha-D-ribose 1-phosphate + uracil. It catalyses the reaction thymidine + phosphate = 2-deoxy-alpha-D-ribose 1-phosphate + thymine. The catalysed reaction is 2'-deoxyuridine + phosphate = 2-deoxy-alpha-D-ribose 1-phosphate + uracil. In terms of biological role, catalyzes phosphorolysis of the pyrimidine nucleosides uridine, thymidine and 2'-deoxyuridine with the formation of the corresponding pyrimidine base and ribose-1-phosphate. The protein is Pyrimidine-nucleoside phosphorylase (pdp) of Staphylococcus aureus (strain bovine RF122 / ET3-1).